The primary structure comprises 146 residues: Ribonuclease H (146 aa).

An RNase H type-1 domain is found at 1-143 (MQKKVTIYTD…CDYLATQAIK (143 aa)). Mg(2+) contacts are provided by Asp10, Glu48, Asp70, and Asp135.

It belongs to the RNase H family. In terms of assembly, monomer. Requires Mg(2+) as cofactor.

The protein resides in the cytoplasm. It catalyses the reaction Endonucleolytic cleavage to 5'-phosphomonoester.. Functionally, endonuclease that specifically degrades the RNA of RNA-DNA hybrids. The sequence is that of Ribonuclease H from Chlorobium phaeobacteroides (strain BS1).